Consider the following 464-residue polypeptide: Protein FAM90A22 (464 aa).

Disordered stretches follow at residues M1–K43, P70–A389, and H415–P437. Composition is skewed to basic and acidic residues over residues G74–A89 and N97–R114. Over residues S182–L197 the composition is skewed to low complexity.

It belongs to the FAM90 family.

This Homo sapiens (Human) protein is Protein FAM90A22.